Reading from the N-terminus, the 107-residue chain is UPF0060 membrane protein RPD_3084 (107 aa).

The next 4 helical transmembrane spans lie at 5–25, 31–51, 59–79, and 85–105; these read IIYVCAALAEIAGCFAFWGWL, VWWLLPGMLSLAAFAYLLTLV, AYASYGGIYIVASLVWLWSVE, and RWDVTGGCVCLIGAAIILWGP.

This sequence belongs to the UPF0060 family.

The protein resides in the cell inner membrane. The polypeptide is UPF0060 membrane protein RPD_3084 (Rhodopseudomonas palustris (strain BisB5)).